Reading from the N-terminus, the 421-residue chain is Fasciclin-like arabinogalactan protein ARB_02922 (421 aa).

Positions 1 to 17 (MLLYYILVALWATVTYA) are cleaved as a signal peptide. FAS1 domains are found at residues 18 to 167 (KSFS…DRPL) and 169 to 296 (LPQS…SDVL). N-linked (GlcNAc...) asparagine glycosylation is found at Asn-52, Asn-75, Asn-80, Asn-120, Asn-145, Asn-181, Asn-223, and Asn-300. Residues 300 to 401 (NDTAKPVPNA…NTPQPGAAAT (102 aa)) form a disordered region. Gly residues-rich tracts occupy residues 344–356 (TSGGEGGGGGGGE) and 372–387 (SGGGGGGGGGAGGGPG). The span at 388 to 401 (PTATNTPQPGAAAT) shows a compositional bias: low complexity. Gly-397 carries GPI-anchor amidated glycine lipidation. Positions 398-421 (AAATERAKAGLAAVVGLGVVLINA) are cleaved as a propeptide — removed in mature form.

Belongs to the fasciclin-like AGP family.

The protein localises to the cell membrane. Functionally, may be a cell surface adhesion protein. The protein is Fasciclin-like arabinogalactan protein ARB_02922 of Arthroderma benhamiae (strain ATCC MYA-4681 / CBS 112371) (Trichophyton mentagrophytes).